The sequence spans 479 residues: M-phase inducer phosphatase (479 aa).

The interval 182–218 (MTESNTNSTTTPPPKTPETARDCFKRPEPPASANCSP) is disordered. Basic and acidic residues predominate over residues 199–209 (ETARDCFKRPE). Residues 316 to 432 (KVASYRIIDC…FFESHVELCE (117 aa)) form the Rhodanese domain. The active site involves cysteine 379. Serine 455 is modified (phosphoserine).

It belongs to the MPI phosphatase family.

It catalyses the reaction O-phospho-L-tyrosyl-[protein] + H2O = L-tyrosyl-[protein] + phosphate. Its function is as follows. This protein functions as a dosage-dependent inducer in mitotic control. It is a tyrosine protein phosphatase required for progression of the cell cycle. It may directly dephosphorylate Cdk1 and activate the Cdk1 activity. This is M-phase inducer phosphatase (stg) from Drosophila melanogaster (Fruit fly).